The following is a 101-amino-acid chain: Small ribosomal subunit protein uS14 (101 aa).

The interval 49-70 is disordered; that stretch reads QSLPRDSSPSRQRNRCNQTGRP. Residues 52–68 are compositionally biased toward polar residues; the sequence is PRDSSPSRQRNRCNQTG.

It belongs to the universal ribosomal protein uS14 family. In terms of assembly, part of the 30S ribosomal subunit. Contacts proteins S3 and S10.

Its function is as follows. Binds 16S rRNA, required for the assembly of 30S particles and may also be responsible for determining the conformation of the 16S rRNA at the A site. The sequence is that of Small ribosomal subunit protein uS14 from Yersinia pseudotuberculosis serotype O:1b (strain IP 31758).